The chain runs to 132 residues: Nickel-responsive regulator (132 aa).

Ni(2+)-binding residues include His76, His87, His89, and Cys95.

The protein belongs to the transcriptional regulatory CopG/NikR family. In terms of assembly, homotetramer. Ni(2+) is required as a cofactor.

In terms of biological role, transcriptional repressor of the nikABCDE operon. Is active in the presence of excessive concentrations of intracellular nickel. The protein is Nickel-responsive regulator of Klebsiella pneumoniae subsp. pneumoniae (strain ATCC 700721 / MGH 78578).